The sequence spans 297 residues: Developmental pluripotency-associated protein 4 (297 aa).

Residues 1 to 77 (MEPSGSKKGR…KVPVPPFPQH (77 aa)) form a disordered region. Residues 23–34 (SSQPSTSSAKTK) are compositionally biased toward low complexity. Basic and acidic residues predominate over residues 43-63 (SEKDDGCKPEEKSAQDPETPG). S211 is modified (phosphoserine).

In terms of assembly, interacts with DPPA2. Interacts with PCGF1.

It is found in the nucleus. Its function is as follows. May be involved in the maintenance of active epigenetic status of target genes. May inhibit differentiation of embryonic stem (ES) cells into a primitive ectoderm lineage. The sequence is that of Developmental pluripotency-associated protein 4 (Dppa4) from Rattus norvegicus (Rat).